The sequence spans 414 residues: uncharacterized protein (414 aa).

Residues 87-117 (KTNDDNKTNGRETHLRPSPSKPEYTGRPTQN) form a disordered region. Residues 88–101 (TNDDNKTNGRETHL) show a composition bias toward basic and acidic residues. Residues 243 to 405 (SMLQSSIDKL…RNKLEMEVER (163 aa)) are a coiled coil.

This is an uncharacterized protein from Encephalitozoon cuniculi (strain GB-M1) (Microsporidian parasite).